Consider the following 238-residue polypeptide: Insulin-like growth factor-binding protein 6 (238 aa).

Residues 1–25 (MTWDGLPTQPLLMLLMLLFAAGSGS) form the signal peptide. One can recognise an IGFBP N-terminal domain in the interval 26–108 (ALAGCPGCGA…LIGQGRCQRA (83 aa)). Cystine bridges form between Cys30–Cys33, Cys41–Cys45, Cys58–Cys64, Cys72–Cys85, and Cys79–Cys105. The disordered stretch occupies residues 104 to 159 (RCQRARGPSEETTKESKPQGGASRSRDTNHRDRQKNPRTSAAPIRPNPVQDSEMGP). 2 stretches are compositionally biased toward basic and acidic residues: residues 110-120 (GPSEETTKESK) and 127-138 (RSRDTNHRDRQK). In terms of domain architecture, Thyroglobulin type-1 spans 157 to 232 (MGPCRRHLDS…SPDGQGSTQC (76 aa)). 3 cysteine pairs are disulfide-bonded: Cys160–Cys188, Cys199–Cys210, and Cys212–Cys232. The disordered stretch occupies residues 218-238 (QPLPVSPDGQGSTQCSARSSG). Over residues 226–238 (GQGSTQCSARSSG) the composition is skewed to polar residues.

As to quaternary structure, interacts (via C-terminal domain) with PHB2. O-glycosylated.

It is found in the secreted. Functionally, IGF-binding proteins prolong the half-life of the IGFs and have been shown to either inhibit or stimulate the growth promoting effects of the IGFs on cell culture. They alter the interaction of IGFs with their cell surface receptors. Activates the MAPK signaling pathway and induces cell migration. This Mus musculus (Mouse) protein is Insulin-like growth factor-binding protein 6 (Igfbp6).